Consider the following 542-residue polypeptide: Isocitrate lyase (542 aa).

Substrate is bound at residue 102–104 (SGW). Asp-170 lines the Mg(2+) pocket. The Proton acceptor role is filled by Cys-208. Substrate-binding positions include 209 to 210 (GH), Arg-245, 428 to 432 (NLSPS), and Thr-462.

Belongs to the isocitrate lyase/PEP mutase superfamily. Isocitrate lyase family. Homotetramer. Mg(2+) is required as a cofactor.

The protein resides in the glyoxysome. The enzyme catalyses D-threo-isocitrate = glyoxylate + succinate. It catalyses the reaction (2S,3R)-3-hydroxybutane-1,2,3-tricarboxylate = pyruvate + succinate. It participates in carbohydrate metabolism; glyoxylate cycle; (S)-malate from isocitrate: step 1/2. In terms of biological role, catalyzes the formation of succinate and glyoxylate from isocitrate, a key step of the glyoxylate cycle, which operates as an anaplerotic route for replenishing the tricarboxylic acid cycle. Required for growth on ethanol or acetate, but dispensable when fermentable carbon sources are available. Also acts on 2-methylisocitrate. This chain is Isocitrate lyase, found in Kluyveromyces lactis (strain ATCC 8585 / CBS 2359 / DSM 70799 / NBRC 1267 / NRRL Y-1140 / WM37) (Yeast).